The chain runs to 21 residues: Pollen allergen Ole e 7 (21 aa).

The chain is Pollen allergen Ole e 7 from Olea europaea (Common olive).